The chain runs to 185 residues: Ribosome-recycling factor (185 aa).

The protein belongs to the RRF family.

It is found in the cytoplasm. Responsible for the release of ribosomes from messenger RNA at the termination of protein biosynthesis. May increase the efficiency of translation by recycling ribosomes from one round of translation to another. The sequence is that of Ribosome-recycling factor from Streptococcus agalactiae serotype V (strain ATCC BAA-611 / 2603 V/R).